The sequence spans 198 residues: MQPEVEPVCFPAMGSPTMHRKAGALLMDLETPEEMQARSLGRPIKSSKQYLRQVIAEYEALDRELPCIRKFPTPPASQPLCLCMETLPEEDFTHLEVLQALEAQLPGAMESGRVSSIRFENMNVICGTAGRRNRWLIAVTDFQTRSRLLRSGLSPRGLAHQIVRHDDLLLGDYRLHLRRSLVRRRMLEALGAEPNEEA.

This is an uncharacterized protein from Homo sapiens (Human).